Consider the following 154-residue polypeptide: Myoglobin (154 aa).

Positions 2 to 148 (GLSDGEWQLV…FRNDMAAKYK (147 aa)) constitute a Globin domain. Serine 4 carries the post-translational modification Phosphoserine. Residue histidine 65 coordinates nitrite. Histidine 65 serves as a coordination point for O2. Threonine 68 carries the post-translational modification Phosphothreonine. Histidine 94 contacts heme b.

It belongs to the globin family. In terms of assembly, monomeric.

Its subcellular location is the cytoplasm. The protein resides in the sarcoplasm. The catalysed reaction is Fe(III)-heme b-[protein] + nitric oxide + H2O = Fe(II)-heme b-[protein] + nitrite + 2 H(+). It catalyses the reaction H2O2 + AH2 = A + 2 H2O. Monomeric heme protein which primary function is to store oxygen and facilitate its diffusion within muscle tissues. Reversibly binds oxygen through a pentacoordinated heme iron and enables its timely and efficient release as needed during periods of heightened demand. Depending on the oxidative conditions of tissues and cells, and in addition to its ability to bind oxygen, it also has a nitrite reductase activity whereby it regulates the production of bioactive nitric oxide. Under stress conditions, like hypoxia and anoxia, it also protects cells against reactive oxygen species thanks to its pseudoperoxidase activity. This is Myoglobin (MB) from Macaca fascicularis (Crab-eating macaque).